The chain runs to 2594 residues: Protein sevenless (2594 aa).

Disordered regions lie at residues 1–34 (MFWR…PKRL) and 49–92 (KMST…RVRR). Residues 1–2141 (MFWREDAAQQ…FVSPEKRGSL (2141 aa)) lie on the Extracellular side of the membrane. The span at 9 to 26 (QQQQQQQQQQQQQQQQQQ) shows a compositional bias: low complexity. N77, N401, N508, N532, N641, N667, N778, N797, N874, and N980 each carry an N-linked (GlcNAc...) asparagine glycan. Fibronectin type-III domains lie at 358 to 462 (ETTQ…TPME) and 468 to 560 (APII…SPLE). Positions 838-938 (PPAPRELRAL…APLATRTWPL (101 aa)) constitute a Fibronectin type-III 3 domain. One copy of the LDL-receptor class B repeat lies at 1024–1066 (GLLYWTDLARDCVQRLDPFSGERELLPIFGARHLALDSAQGHL). Fibronectin type-III domains are found at residues 1227 to 1317 (LAVP…QLDT) and 1324 to 1430 (QPRR…VQSV). 12 N-linked (GlcNAc...) asparagine glycosylation sites follow: N1257, N1344, N1382, N1577, N1587, N1665, N1752, N1776, N1824, N1908, N1966, and N2088. 4 Fibronectin type-III domains span residues 1711-1814 (TAAA…TLHT), 1821-1920 (APRN…SYAP), 1922-2010 (PPLQ…TLGD), and 2014-2132 (APGR…AEPF). The helical transmembrane segment at 2142–2162 (VLAIIAPAAIVSSCVLALVLV) threads the bilayer. The Cytoplasmic segment spans residues 2163–2594 (RKLQKRRHRA…LYANEGISGL (432 aa)). The Protein kinase domain maps to 2224–2495 (LTLLRFLGSG…KRCLSTLQAL (272 aa)). ATP-binding positions include 2230 to 2238 (LGSGAFGEV) and K2257. Catalysis depends on D2355, which acts as the Proton acceptor. The residue at position 2391 (Y2391) is a Phosphotyrosine; by autocatalysis. Residues 2543 to 2568 (TVSTTDADTTGSPTTPTAPTTPTTTT) are disordered. The span at 2545-2568 (STTDADTTGSPTTPTAPTTPTTTT) shows a compositional bias: low complexity.

Belongs to the protein kinase superfamily. Tyr protein kinase family. Insulin receptor subfamily.

The protein resides in the cell membrane. The catalysed reaction is L-tyrosyl-[protein] + ATP = O-phospho-L-tyrosyl-[protein] + ADP + H(+). Its function is as follows. Receptor for an extracellular signal required to instruct a cell to differentiate into a R7 photoreceptor. The ligand for Sev is the Boss (Bride of Sevenless) protein. This Drosophila virilis (Fruit fly) protein is Protein sevenless (sev).